A 410-amino-acid polypeptide reads, in one-letter code: Metal tolerance protein 3 (410 aa).

The disordered stretch occupies residues 1–58 (MDGDDRRTPLLGGEGGSTRPPSLRRRDSARSLRSTFLSRLPDKVRGGGDPERPAADVD). Topologically, residues 1–114 (MDGDDRRTPL…EDKEQKQSES (114 aa)) are cytoplasmic. The segment covering 40–58 (LPDKVRGGGDPERPAADVD) has biased composition (basic and acidic residues). A helical transmembrane segment spans residues 115–135 (AMKISNYANIILLVFKVYATI). The Vacuolar portion of the chain corresponds to 136–140 (KTGSM). The helical transmembrane segment at 141 to 161 (AIAASTLDSLLDFLAGGILYF) threads the bilayer. At 162–184 (THLTMKSVNIYKYPIGKLRVQPV) the chain is on the cytoplasmic side. The chain crosses the membrane as a helical span at residues 185 to 205 (GIIVFAAIMATLGFQVLIQAI). The Vacuolar portion of the chain corresponds to 206–221 (EQLVENKAGEKMTPEQ). The chain crosses the membrane as a helical span at residues 222 to 242 (LIWLYSIMLSATVVKLALYIY). Topologically, residues 243–258 (CRSSGNSIVQAYAKDH) are cytoplasmic. The helical transmembrane segment at 259–275 (YFDVVTNVVGLVAAVLG) threads the bilayer. The Vacuolar portion of the chain corresponds to 276-284 (DKFFWWIDP). A helical transmembrane segment spans residues 285 to 303 (VGAVLLAVYTIVNWSGTVY). The Cytoplasmic portion of the chain corresponds to 304 to 410 (ENAVTLVGQC…VRSRLPSTEP (107 aa)).

This sequence belongs to the cation diffusion facilitator (CDF) transporter (TC 2.A.4) family. SLC30A subfamily.

Its subcellular location is the vacuole membrane. Its function is as follows. Involved in sequestration of excess metal in the cytoplasm into vacuoles to maintain metal homeostasis. The chain is Metal tolerance protein 3 (MTP3) from Oryza sativa subsp. japonica (Rice).